The primary structure comprises 293 residues: Methoxy mycolic acid synthase MmaA3 (293 aa).

Residues Tyr-39–Ser-40, Gly-78–Gly-80, Thr-100–Gln-105, Trp-129–Ala-130, and Ile-142 contribute to the S-adenosyl-L-methionine site. Cys-275 is a catalytic residue.

This sequence belongs to the CFA/CMAS family.

Its pathway is lipid metabolism; mycolic acid biosynthesis. Involved in the biosynthesis of methoxymycolic acid. It catalyzes the O-methylation of the hydroxy group of the hydroxymycolate to form a methyl ether. In Mycobacterium bovis (strain ATCC BAA-935 / AF2122/97), this protein is Methoxy mycolic acid synthase MmaA3 (cmaB).